We begin with the raw amino-acid sequence, 486 residues long: MATFKDACYQYKKLNKLNNAVLKLGANDVWRPSTLTKRKGWCLDCCQHTDLTYCQGCLIYHVCEWCSQYNRCFLDDDPHLLRMRTFRNEITKSDLENLINMYNTLFPINKKIVHKFANTIKQHKCRNEYSTQWYNHFLMPITLQSLSIELDGDIYYIFGYYDDMHKINQTPFSFTNLISKYDMLLLDSINFDRMAFLPLTLQQEYALRYFSKSRFITERRKCIEILHFSDNILDNLHNPNFTLQVIRNCSNMSVEWNKACNIIRNISDYFDILKSSHTEFYNISPRCRMFTQYKLKIASKLIKPNYVASNHNSLATEVHNCKWCSINNNSIVWNDFRIKNVYNDIFNFIRALVKSNLYVGHCSSEEKIYESIKEVLNVCKENEWNMLVTEMFNQLEPIKLNENNYILLNYEINWNVMNVLINSIGKIPKILTLSDVILILRIIIYDWFDIRFMRNTPMTTFTVNKLKQLYEKDRTAEHDSRISDIE.

Residues 1 to 81 (MATFKDACYQ…CFLDDDPHLL (81 aa)) are RNA-binding. The interval 42 to 79 (CLDCCQHTDLTYCQGCLIYHVCEWCSQYNRCFLDDDPH) is zinc-binding domain. Positions 82-176 (RMRTFRNEIT…INQTPFSFTN (95 aa)) are important for cytoskeleton localization. Residues 317-486 (EVHNCKWCSI…EHDSRISDIE (170 aa)) are interaction with host IRF3. Positions 480 to 483 (SRIS) match the pLxIS motif motif.

Belongs to the rotavirus NSP1 family. In terms of assembly, interacts (via C-terminus) with host IRF3; this interaction leads to IRF3 degradation. Interacts with host IRF7; this interaction leads to IRF7 degradation. Interacts with host CUL1 and CUL3.

It localises to the host cytoplasm. The protein localises to the host cytoskeleton. In terms of biological role, plays a role in the inhibition of host innate immunity by inducing the degradation of key host factors required to activate interferon production such as IRF3, IRF5 or IRF7. Associates with components of cullin RING ligases (CRLs) including CUL1 or CUL3, which are essential multisubunit ubiquitination complexes, to modulate their activities. The protein is Non-structural protein 1 of Rotavirus A (strain RVA/Human/United States/DS-1/1976/G2P1B[4]) (RV-A).